The sequence spans 427 residues: MPPPLPSLCNFNLAILFLFLTPTFQIPLIAPISKDDTTQLYTLSVFLKTPLQPTKLHLHLGSSLSWVLCDSTYTSSSSHHIPCNTPLCNSFPSNACSNNSSLCALFPENPVTRNTLLDTALIDSLALPTYDASSSLVLISDFIFSCATAHLLQGLAANALGLASLGRSNYSLPAQISTSLTSPRSFTLCLPASSANTGAAIFASTASSFLFSSKIDLTYTQLIVNPVADTVVTDNPQPSDEYFINLTSIKINGKPLYINSSILTVDQTGFGGTKISTAEPYTVLETSIYRLFVQRFVNESSAFNLTVTEAVEPFGVCYPAGDLTETRVGPAVPTVDLVMHSEDVFWRIFGGNSMVRVAKGGVDVWCLGFVDGGTRGRTPIVIGGHQLEDNLMQFDLDSNRFGFTSTLLLQDAKCSNLKVNNFANGIK.

The first 25 residues, 1 to 25 (MPPPLPSLCNFNLAILFLFLTPTFQ), serve as a signal peptide directing secretion. The 364-residue stretch at 41 to 404 (YTLSVFLKTP…DLDSNRFGFT (364 aa)) folds into the Peptidase A1 domain. Residues Asn-99, Asn-169, Asn-245, Asn-259, Asn-298, and Asn-304 are each glycosylated (N-linked (GlcNAc...) asparagine).

The protein belongs to the peptidase A1 family. As to quaternary structure, interacts with the Phytophtora sojae xyloglucanase XEG1 and xyloglucanase-like XLP1. Possesses stronger binding affinity with XLP1, a truncated paralog of P.sojae XEG1 which has no enzyme activity.

The protein localises to the secreted. Its subcellular location is the extracellular space. It is found in the apoplast. Its function is as follows. Involved in plant defense against Phytophtora sojae. Contributes positively to soybean resistance against P.sojae. Binds the P.sojae xyloglucanase XEG1 and inhibits its cell wall degrading enzyme activity and its contribution as P.sojae virulence factor. XEG1 acts as an important virulence factor during P.sojae infection but also acts as a pathogen-associated molecular pattern (PAMP) in soybean and solanaceous species, where it can trigger defense responses including cell death. In terms of biological role, (Microbial infection) Possesses stronger binding affinity with XLP1, a truncated paralog of P.sojae XEG1 which has no enzyme activity. Is impaired in its inhibitor activity towards the P.sojae xyloglucanase XEG1 when hijacked by XLP1 binding. This Glycine max (Soybean) protein is Probable aspartic proteinase GIP1.